Here is a 298-residue protein sequence, read N- to C-terminus: MASLKALRGRITSVKSTQKITSAMKMVAASKLRRAQQAAEAARPYAELMQRMLAALADNVAGSPSAPRILVGTGQDKVHLLVVISADRGLAGAFNTNVGRAARTLANRLESEGKTVKILTVGRKARDYLRRDLETRLLPETSLAGKKVLAFADALALSQQITARLDAGEFDVCTLVYNHFNSVISQTPGETQLIPAQVPQAAPADAGASSNGAKAVYEFEPDEETLLAKLLPQNLAIQIYRAILESAAGEHAARMTAMDNATRNAGDMIKRLSLTYNRTRQANITRELIEIISGAEAL.

Belongs to the ATPase gamma chain family. As to quaternary structure, F-type ATPases have 2 components, CF(1) - the catalytic core - and CF(0) - the membrane proton channel. CF(1) has five subunits: alpha(3), beta(3), gamma(1), delta(1), epsilon(1). CF(0) has three main subunits: a, b and c.

The protein localises to the cell inner membrane. Functionally, produces ATP from ADP in the presence of a proton gradient across the membrane. The gamma chain is believed to be important in regulating ATPase activity and the flow of protons through the CF(0) complex. This Granulibacter bethesdensis (strain ATCC BAA-1260 / CGDNIH1) protein is ATP synthase gamma chain.